Here is a 1311-residue protein sequence, read N- to C-terminus: Zinc finger protein 521 (1311 aa).

Residues 1-10 show a composition bias toward basic residues; that stretch reads MSRRKQAKPR. Residues 1–37 form a disordered region; sequence MSRRKQAKPRSLKDPNCKLEDKTEDGEALDCKKRPED. The segment covering 11 to 21 has biased composition (basic and acidic residues); the sequence is SLKDPNCKLED. The C2H2-type 1; degenerate zinc finger occupies 47 to 67; sequence HSCDSCLQVFESLSDITEHKI. The disordered stretch occupies residues 81–108; sequence DPTCSWPASSPSSKDQTSPSHGEGCDFG. Positions 87-102 are enriched in low complexity; sequence PASSPSSKDQTSPSHG. C2H2-type zinc fingers lie at residues 118–140, 146–168, 174–196, 202–224, 246–269, 281–304, and 310–332; these read YPCQ…EQSH, FKCT…IKLH, YHCS…LKTH, YKCA…MQVH, QKCS…AECH, LQCV…EQVH, and NSCS…MDSH. The span at 349 to 358 shows a compositional bias: low complexity; sequence VGYTSVSSTT. Residues 349–397 form a disordered region; the sequence is VGYTSVSSTTPDSNLSVDSSTMVEAAPPIPKSRGRKRAAQQTPDMTGPS. 2 stretches are compositionally biased toward polar residues: residues 359–370 and 387–397; these read PDSNLSVDSSTM and AQQTPDMTGPS. Residues 405-429 form a C2H2-type 9; degenerate zinc finger; the sequence is YSCIYCNKQLFSSLAVLQIHLKTMH. 3 consecutive C2H2-type zinc fingers follow at residues 437–460, 477–500, and 513–536; these read HICQ…KQVH, YQCN…RCSH, and FFCP…RQVH. Serine 546 is subject to Phosphoserine. A C2H2-type 13; atypical zinc finger spans residues 560–585; that stretch reads YSCSYCTNSPIFNSVLKLNKHIKENH. 2 positions are modified to phosphoserine: serine 605 and serine 608. 7 consecutive C2H2-type zinc fingers follow at residues 634–656, 664–686, 694–717, 722–745, 752–775, 783–805, and 809–832; these read YICN…LKTH, LTCP…VTIH, YICE…LDMH, FRCT…AVKH, YRCT…KHNH, HKCI…ITTH, and YNCK…REKH. Residues 863–882 form a disordered region; it reads TNSQESHNSHDGSEEDVDTS. A C2H2-type 21; degenerate zinc finger spans residues 886–908; it reads YGCDICGAAYTMETLLQNHQLRD. C2H2-type zinc fingers lie at residues 930 to 952, 959 to 981, and 1020 to 1042; these read YKCN…MQTH, YMCP…KVTH, and FRCV…GTFH. The segment at 1065–1083 adopts a C2H2-type 25; degenerate zinc-finger fold; it reads YKCASCLKEFRSKQDLVKL. The C2H2-type 26 zinc-finger motif lies at 1138 to 1161; that stretch reads TRCSSCNVKFESESELQNHIQTIH. Lysine 1146 is covalently cross-linked (Glycyl lysine isopeptide (Lys-Gly) (interchain with G-Cter in SUMO2)). Over residues 1168-1178 the composition is skewed to polar residues; the sequence is SNSTQLKTPQV. Residues 1168–1188 are disordered; the sequence is SNSTQLKTPQVSPMPRISPSQ. C2H2-type zinc fingers lie at residues 1195–1217, 1225–1247, 1256–1279, and 1286–1309; these read YQCI…VANH, HECK…LIEH, FKCP…FSAH, and YDCT…MTQH.

This sequence belongs to the krueppel C2H2-type zinc-finger protein family. In terms of assembly, interacts with EBF1. Interacts with SMAD1 and SMAD4. As to expression, predominantly expressed in hematopoietic cells. Present in organs and tissues that contain stem and progenitor cells, myeloid and/or lymphoid: placenta, spleen, lymph nodes, thymus, bone marrow and fetal liver. Within the hematopoietic system, it is abundant in CD34(+) cells but undetectable in mature peripheral blood leukocytes, and its levels rapidly decrease during the differentiation of CD34(+) cells in response to hemopoietins.

It is found in the nucleus. In terms of biological role, transcription factor that can both act as an activator or a repressor depending on the context. Involved in BMP signaling and in the regulation of the immature compartment of the hematopoietic system. Associates with SMADs in response to BMP2 leading to activate transcription of BMP target genes. Acts as a transcriptional repressor via its interaction with EBF1, a transcription factor involved specification of B-cell lineage; this interaction preventing EBF1 to bind DNA and activate target genes. The sequence is that of Zinc finger protein 521 (ZNF521) from Homo sapiens (Human).